Consider the following 139-residue polypeptide: Putative pre-16S rRNA nuclease (139 aa).

The protein belongs to the YqgF nuclease family.

Its subcellular location is the cytoplasm. In terms of biological role, could be a nuclease involved in processing of the 5'-end of pre-16S rRNA. This Pectobacterium atrosepticum (strain SCRI 1043 / ATCC BAA-672) (Erwinia carotovora subsp. atroseptica) protein is Putative pre-16S rRNA nuclease.